Here is a 36-residue protein sequence, read N- to C-terminus: Photosystem I reaction center subunit VIII (36 aa).

The helical transmembrane segment at 9-29 (ILVPLVGLIFPAIAMTSLFIY) threads the bilayer.

This sequence belongs to the PsaI family.

The protein resides in the plastid. It is found in the chloroplast thylakoid membrane. In terms of biological role, may help in the organization of the PsaL subunit. The polypeptide is Photosystem I reaction center subunit VIII (Tupiella akineta (Green alga)).